The following is a 60-amino-acid chain: MANKLEITLKRSVIGRPEDQRVTVRTLGLKKTNQTVVHEDNAAIRGMINKVSHLVSVKEQ.

The protein belongs to the universal ribosomal protein uL30 family. As to quaternary structure, part of the 50S ribosomal subunit.

This Bacillus pumilus (strain SAFR-032) protein is Large ribosomal subunit protein uL30.